The following is a 288-amino-acid chain: Chitinase 5 (288 aa).

The first 29 residues, 1–29, serve as a signal peptide directing secretion; sequence MANSPTPTMLAFLALGLALLLSATGQASA. Residues 30-64 enclose the Chitin-binding type-1 domain; that stretch reads QNCGCQSNMCCSKWGYCGTGKDYCGDGCRSGPCYG. Disulfide bonds link C32–C40, C34–C46, C39–C53, C57–C62, C107–C156, C169–C178, and C256–C288. Residue E151 is the Proton donor of the active site.

It belongs to the glycosyl hydrolase 19 family. Chitinase class IV subfamily. As to expression, expressed in sheaths and meristems and at lower levels in roots and leaves.

The enzyme catalyses Random endo-hydrolysis of N-acetyl-beta-D-glucosaminide (1-&gt;4)-beta-linkages in chitin and chitodextrins.. Functionally, may function in reproductive organs during embryogenesis and seed maturation. In Oryza sativa subsp. japonica (Rice), this protein is Chitinase 5 (Cht5).